The primary structure comprises 85 residues: UPF0291 protein SPCG_1462 (85 aa).

Residues Thr-62–Ser-85 form a disordered region.

This sequence belongs to the UPF0291 family.

The protein localises to the cytoplasm. The sequence is that of UPF0291 protein SPCG_1462 from Streptococcus pneumoniae (strain CGSP14).